A 241-amino-acid polypeptide reads, in one-letter code: Lipoprotein MxiJ (241 aa).

The first 17 residues, methionine 1 to glycine 17, serve as a signal peptide directing secretion. A lipid anchor (N-palmitoyl cysteine) is attached at cysteine 18. A lipid anchor (S-diacylglycerol cysteine) is attached at cysteine 18.

It belongs to the YscJ lipoprotein family.

It localises to the cell outer membrane. In terms of biological role, involved in the secretion of the Ipa antigens. The protein is Lipoprotein MxiJ (mxiJ) of Shigella sonnei.